Consider the following 228-residue polypeptide: UPF0134 protein MPN_137 (228 aa).

This sequence belongs to the UPF0134 family.

The sequence is that of UPF0134 protein MPN_137 from Mycoplasma pneumoniae (strain ATCC 29342 / M129 / Subtype 1) (Mycoplasmoides pneumoniae).